The following is a 231-amino-acid chain: Large ribosomal subunit protein uL1 (231 aa).

It belongs to the universal ribosomal protein uL1 family. Part of the 50S ribosomal subunit.

Its function is as follows. Binds directly to 23S rRNA. The L1 stalk is quite mobile in the ribosome, and is involved in E site tRNA release. In terms of biological role, protein L1 is also a translational repressor protein, it controls the translation of the L11 operon by binding to its mRNA. The sequence is that of Large ribosomal subunit protein uL1 from Halalkalibacterium halodurans (strain ATCC BAA-125 / DSM 18197 / FERM 7344 / JCM 9153 / C-125) (Bacillus halodurans).